We begin with the raw amino-acid sequence, 207 residues long: Ribosomal RNA small subunit methyltransferase G (207 aa).

Residues Gly74, Leu79, 125-126 (VE), and Arg140 each bind S-adenosyl-L-methionine.

Belongs to the methyltransferase superfamily. RNA methyltransferase RsmG family.

It localises to the cytoplasm. The enzyme catalyses guanosine(527) in 16S rRNA + S-adenosyl-L-methionine = N(7)-methylguanosine(527) in 16S rRNA + S-adenosyl-L-homocysteine. Specifically methylates the N7 position of guanine in position 527 of 16S rRNA. In Shewanella pealeana (strain ATCC 700345 / ANG-SQ1), this protein is Ribosomal RNA small subunit methyltransferase G.